The sequence spans 425 residues: ATP-dependent RNA helicase RhlB (425 aa).

The Q motif motif lies at 9–37; that stretch reads TRFADLALHPKIQQAISSAGFEYCTPIQA. A Helicase ATP-binding domain is found at 40-218; sequence LPVALSNRDV…YEHMNAPTKL (179 aa). 53 to 60 serves as a coordination point for ATP; the sequence is AQTGTGKT. Positions 164–167 match the DEAD box motif; it reads DEAD. The region spanning 242–389 is the Helicase C-terminal domain; the sequence is KFPLLLTLIE…VTKYDGDALL (148 aa). The segment at 391–425 is disordered; it reads DLRRPRPIQRRRRHNSGGGKGKPRGRRSGPPRNAS. A compositionally biased stretch (basic residues) spans 395 to 419; the sequence is PRPIQRRRRHNSGGGKGKPRGRRSG.

The protein belongs to the DEAD box helicase family. RhlB subfamily. Component of the RNA degradosome, which is a multiprotein complex involved in RNA processing and mRNA degradation.

The protein resides in the cytoplasm. It carries out the reaction ATP + H2O = ADP + phosphate + H(+). In terms of biological role, DEAD-box RNA helicase involved in RNA degradation. Has RNA-dependent ATPase activity and unwinds double-stranded RNA. The sequence is that of ATP-dependent RNA helicase RhlB from Idiomarina loihiensis (strain ATCC BAA-735 / DSM 15497 / L2-TR).